The sequence spans 402 residues: MISATATAAFLAAAPASSSSCTTHRRRSGLPAISASLATASSTEEPLLVRAARGEDGLPRPPAWMMRQAGRYMAEYQALAKRHPSFRERSETTELIVEITLQPWRAFAPDGVILFSDILTPLPAIGVPFDISDSKGPVIQSPVRSEEQVRELTPIDFEKLRFVGESLKILRTEIDGQAALLGFVGAPWTIATYVVEGGMTNTYTNIKSMCHTAPNVLRGLLSHLADAISEYIIYQVNSGAQCIQIFDSWGGQLPPHVWEQWSKPYIKQIVNKIKIECPNVPLVLYINGNGGLLERMTDTGVDVIGLDWTVDMADGRRRLGNKISVQGNVDPAFLFSPLPVLTDEIHRVVKSAGPKGHILNLGHGVLVKTPEEAVAHFFDVTRSLRYDTLFQGCVTEVLEPVA.

The transit peptide at 1-50 (MISATATAAFLAAAPASSSSCTTHRRRSGLPAISASLATASSTEEPLLVR) directs the protein to the chloroplast. Residues 67–71 (RQAGR), Phe-86, Ser-116, Asp-117, Tyr-193, Ser-248, and His-363 each bind substrate.

Belongs to the uroporphyrinogen decarboxylase family. In terms of assembly, homodimer.

It localises to the plastid. The protein resides in the chloroplast. The enzyme catalyses uroporphyrinogen III + 4 H(+) = coproporphyrinogen III + 4 CO2. Its pathway is porphyrin-containing compound metabolism; protoporphyrin-IX biosynthesis; coproporphyrinogen-III from 5-aminolevulinate: step 4/4. Functionally, catalyzes the decarboxylation of four acetate groups of uroporphyrinogen-III to yield coproporphyrinogen-III. This chain is Uroporphyrinogen decarboxylase 1, chloroplastic, found in Oryza sativa subsp. japonica (Rice).